The following is a 162-amino-acid chain: Large ribosomal subunit protein uL15 (162 aa).

The tract at residues 1–44 (MKLNELRDNPGATKNRIRVGRGIGSGKGKTAGRGVKGQKSREGV) is disordered. The segment covering 21 to 35 (RGIGSGKGKTAGRGV) has biased composition (gly residues).

Belongs to the universal ribosomal protein uL15 family. In terms of assembly, part of the 50S ribosomal subunit.

Binds to the 23S rRNA. This chain is Large ribosomal subunit protein uL15, found in Rhodospirillum rubrum (strain ATCC 11170 / ATH 1.1.1 / DSM 467 / LMG 4362 / NCIMB 8255 / S1).